The primary structure comprises 228 residues: Protein GlxC (228 aa).

The protein belongs to the FwdC/FmdC family.

The polypeptide is Protein GlxC (glxC) (Rhizobium meliloti (strain 1021) (Ensifer meliloti)).